The chain runs to 336 residues: Dihydroorotate dehydrogenase (quinone) (336 aa).

FMN is bound by residues 62–66 and Thr86; that span reads AGLDK. Lys66 provides a ligand contact to substrate. 111 to 115 provides a ligand contact to substrate; sequence NRMGF. Residues Asn139 and Asn172 each contribute to the FMN site. Asn172 contacts substrate. Ser175 acts as the Nucleophile in catalysis. Asn177 provides a ligand contact to substrate. FMN is bound by residues Lys217 and Thr245. 246-247 contributes to the substrate binding site; it reads NT. FMN contacts are provided by residues Gly268, Gly297, and 318–319; that span reads YS.

It belongs to the dihydroorotate dehydrogenase family. Type 2 subfamily. As to quaternary structure, monomer. Requires FMN as cofactor.

It localises to the cell membrane. The catalysed reaction is (S)-dihydroorotate + a quinone = orotate + a quinol. Its pathway is pyrimidine metabolism; UMP biosynthesis via de novo pathway; orotate from (S)-dihydroorotate (quinone route): step 1/1. Functionally, catalyzes the conversion of dihydroorotate to orotate with quinone as electron acceptor. The protein is Dihydroorotate dehydrogenase (quinone) of Escherichia coli O17:K52:H18 (strain UMN026 / ExPEC).